A 205-amino-acid chain; its full sequence is MASASPVATMSGRGARNLLQFLRLVGQLKRVPRTGWVYRNVQKPESVSDHMYRMAVMALVTKDEHLNKDRCVRLALVHDMAECIVGDIAPADNVPREEKHRREEEAMKQLTQLLPEDLQKELYELWEEYETQSSAEAKFVKQLDQCEMILQASEYEDLENKPGRLQDFYDSTAGKFSHPEIVQLVSELEAERNANIAGAASEPCS.

At A2 the chain carries N-acetylalanine. Phosphoserine occurs at positions 3 and 5. In terms of domain architecture, HD spans 47-149 (VSDHMYRMAV…VKQLDQCEMI (103 aa)). Residues H50, H78, D79, E82, D87, I88, and D144 each contribute to the a divalent metal cation site. S205 bears the Phosphoserine mark.

This sequence belongs to the HDDC2 family. In terms of assembly, homodimer. Mn(2+) is required as a cofactor. Requires Co(2+) as cofactor. The cofactor is Mg(2+).

It carries out the reaction a 2'-deoxyribonucleoside 5'-phosphate + H2O = a 2'-deoxyribonucleoside + phosphate. In terms of biological role, catalyzes the dephosphorylation of the nucleoside 5'-monophosphates deoxyadenosine monophosphate (dAMP), deoxycytidine monophosphate (dCMP), deoxyguanosine monophosphate (dGMP) and deoxythymidine monophosphate (dTMP). The polypeptide is 5'-deoxynucleotidase HDDC2 (HDDC2) (Bos taurus (Bovine)).